A 369-amino-acid polypeptide reads, in one-letter code: LIM homeobox transcription factor 1-beta (369 aa).

2 LIM zinc-binding domains span residues 23–73 and 82–135; these read CEGC…CKQD and CSGC…CKGD. Residues 143-196 form a disordered region; the sequence is LSSVSPDESDSVKSEDEDGDMKPAKGQGSQSKGGGDDGKDPRRPKRPRTILTTQ. Residues 186–245 constitute a DNA-binding region (homeobox); it reads PKRPRTILTTQQRRAFKASFEVSSKPCRKVRETLAAETGLSVRVVQVWFQNQRAKMKKLA.

In terms of assembly, interacts with DHX9.

It localises to the nucleus. Functionally, transcription factor involved in the regulation of podocyte-expressed genes. Essential for the specification of dorsal limb fate at both the zeugopodal and autopodal levels. The sequence is that of LIM homeobox transcription factor 1-beta (LMX1B) from Mesocricetus auratus (Golden hamster).